Here is a 379-residue protein sequence, read N- to C-terminus: Cytochrome b (379 aa).

The next 4 membrane-spanning stretches (helical) occupy residues 34-54, 78-99, 114-134, and 179-199; these read FGSLLGICLITQILTGLLLAT, WLIRNLHANGASFFFICIYLHI, WNIGIILLLTLMATAFVGYVL, and FFALHFLLPFLIVSLSIIHLT. The heme b site is built by His-84 and His-98. Heme b contacts are provided by His-183 and His-197. Residue His-202 participates in a ubiquinone binding. The next 4 membrane-spanning stretches (helical) occupy residues 227–247, 289–309, 321–341, and 348–368; these read TKDMLGFTLMFFPLLTLAFFF, LGGVLALTASVLILFLSPLLH, MSQLLFWLLIANLLILTWIGS, and FIIIGQVASFTYFFTLLFLFP.

The protein belongs to the cytochrome b family. As to quaternary structure, the cytochrome bc1 complex contains 11 subunits: 3 respiratory subunits (MT-CYB, CYC1 and UQCRFS1), 2 core proteins (UQCRC1 and UQCRC2) and 6 low-molecular weight proteins (UQCRH/QCR6, UQCRB/QCR7, UQCRQ/QCR8, UQCR10/QCR9, UQCR11/QCR10 and a cleavage product of UQCRFS1). This cytochrome bc1 complex then forms a dimer. Heme b serves as cofactor.

It is found in the mitochondrion inner membrane. Functionally, component of the ubiquinol-cytochrome c reductase complex (complex III or cytochrome b-c1 complex) that is part of the mitochondrial respiratory chain. The b-c1 complex mediates electron transfer from ubiquinol to cytochrome c. Contributes to the generation of a proton gradient across the mitochondrial membrane that is then used for ATP synthesis. The chain is Cytochrome b (MT-CYB) from Tinamus major (Great tinamou).